Reading from the N-terminus, the 583-residue chain is Pectinesterase/pectinesterase inhibitor U1 (583 aa).

Positions 1 to 40 (MTRVEDFFSKQIDFCKRKKKIYLAIVASVLLVAAVIGVVA) are cleaved as a signal peptide. Residues 60–221 (SSAHAIVKSA…EKMCSNALAM (162 aa)) form a pectinesterase inhibitor U1 region. N-linked (GlcNAc...) asparagine glycans are attached at residues asparagine 85, asparagine 105, and asparagine 224. Residues 272 to 570 (DVVVAADGSG…TPGRFIAGGS (299 aa)) are pectinesterase U1. Residues threonine 347 and glutamine 377 each coordinate substrate. Catalysis depends on aspartate 400, which acts as the Proton donor; for pectinesterase activity. A disulfide bridge links cysteine 414 with cysteine 434. Aspartate 421 (nucleophile; for pectinesterase activity) is an active-site residue. Substrate contacts are provided by arginine 489 and tryptophan 491.

The protein in the N-terminal section; belongs to the PMEI family. This sequence in the C-terminal section; belongs to the pectinesterase family.

Its subcellular location is the secreted. It localises to the cell wall. The enzyme catalyses [(1-&gt;4)-alpha-D-galacturonosyl methyl ester](n) + n H2O = [(1-&gt;4)-alpha-D-galacturonosyl](n) + n methanol + n H(+). It participates in glycan metabolism; pectin degradation; 2-dehydro-3-deoxy-D-gluconate from pectin: step 1/5. Functionally, acts in the modification of cell walls via demethylesterification of cell wall pectin. This is Pectinesterase/pectinesterase inhibitor U1 (PMEU1) from Solanum lycopersicum (Tomato).